The chain runs to 244 residues: MDMKKRIHLELRNRTPADVKELVLDNCRSKEGKIEGLTDEFEGLEFLSTINVCLSSIANLPKLNKLKKLELSDNNISGGLEVLAEKCPNLTHLNLSGNRIKDLSTIEPLKKLEHLKSLDLFNCEVTNLNDYRENLFKLLPQLTYLDGYDRDDKEAPDSDAEGYVEGLDDDEDDEDEDDYDEDVPPGEEGEDDDDEEEGEEEEVSGEEEEDEDASREGEEDEGDEEAEHGEKRKRDQDDEGEDDD.

LRR repeat units follow at residues 18 to 41 (DVKELVLDNCRSKEGKIEGLTDEF), 43 to 64 (GLEFLSTINVCLSSIANLPKLN), 65 to 87 (KLKKLELSDNNISGGLEVLAEKC), and 89 to 110 (NLTHLNLSGNRIKDLSTIEPLK). The LRRCT domain maps to 123–161 (CEVTNLNDYRENLFKLLPQLTYLDGYDRDDKEAPDSDAE). The disordered stretch occupies residues 148 to 244 (YDRDDKEAPD…DQDDEGEDDD (97 aa)). Residues 157–227 (DSDAEGYVEG…EEDEGDEEAE (71 aa)) are compositionally biased toward acidic residues.

It belongs to the ANP32 family. In terms of processing, phosphorylated on serine residues.

It is found in the nucleus. The protein localises to the cytoplasm. Its subcellular location is the endoplasmic reticulum. Functionally, implicated in a number of cellular processes, including proliferation, differentiation, caspase-dependent and caspase-independent apoptosis, suppression of transformation (tumor suppressor), inhibition of protein phosphatase 2A, regulation of mRNA trafficking and stability, and inhibition of acetyltransferases as part of the INHAT (inhibitor of histone acetyltransferases) complex. The protein is Acidic leucine-rich nuclear phosphoprotein 32 family member A (anp32a) of Xenopus laevis (African clawed frog).